The sequence spans 1464 residues: Neuropathy target esterase sws (1464 aa).

The Lumenal segment spans residues 1-34 (MDVLELLRASATGCYNTIFSEAWHQYVHKQIAAA). A helical transmembrane segment spans residues 35–55 (VYWYGALFLLGVLLFVWFLYF). Residues 56-1464 (KRLARLRLRD…GNTTNNDTKN (1409 aa)) are Cytoplasmic-facing. 176–303 (IFGHFEKPIF…IRVIQVIMIR (128 aa)) provides a ligand contact to a nucleoside 3',5'-cyclic phosphate. Disordered stretches follow at residues 329–393 (NKNS…LHYH) and 409–438 (QQQQ…SSPT). Residues 338-367 (TGQTTSNVQSQTSQATQSRPSGTTRTPTSP) are compositionally biased toward low complexity. Positions 409–420 (QQQQSLNSPRRN) are enriched in polar residues. Ser421 is subject to Phosphoserine. Residues 422–438 (TAHVSEAAAASTASSPT) are compositionally biased toward low complexity. Residues 456-586 (ELGL…VVRR) and 575-702 (IVLG…LSHR) each bind a nucleoside 3',5'-cyclic phosphate. Residues 928-1094 (LVLGGGGARG…VNNLPGHLWR (167 aa)) form the PNPLA domain. The GXGXXG motif lies at 932-937 (GGGARG). A GXSXG motif is present at residues 959-963 (GVSIG). Catalysis depends on Ser961, which acts as the Nucleophile. Asp1081 (proton acceptor) is an active-site residue. A DGA/G motif is present at residues 1081–1083 (DGG). Ser1175 carries the phosphoserine modification. Disordered regions lie at residues 1352–1374 (VDKA…PTPS) and 1400–1464 (ATNT…DTKN). Residues 1429 to 1444 (KRTEQDEHELEHEQVV) show a composition bias toward basic and acidic residues. Residues 1450 to 1464 (MDKQQGNTTNNDTKN) show a composition bias toward polar residues.

The protein belongs to the NTE family. Interacts with Pka-C3; interaction inhibits the catalytic function of Pka-C3 and the esterase activity of sws.

Its subcellular location is the endoplasmic reticulum membrane. It catalyses the reaction a 1-acyl-sn-glycero-3-phosphocholine + H2O = sn-glycerol 3-phosphocholine + a fatty acid + H(+). Phospholipase B that deacylates intracellular phosphatidylcholine (PtdCho), generating glycerophosphocholine (GroPtdCho). This deacylation occurs at both sn-2 and sn-1 positions of PtdCho. Its specific chemical modification by certain organophosphorus (OP) compounds leads to distal axonopathy. Plays a role in the signaling mechanism between neurons and glia that regulates glia wrapping during development of the adult brain. Essential for membrane lipid homeostasis and cell survival in both neurons and glia of the adult brain. The polypeptide is Neuropathy target esterase sws (Drosophila grimshawi (Hawaiian fruit fly)).